Here is a 181-residue protein sequence, read N- to C-terminus: BURP domain-containing protein 7 (181 aa).

An N-terminal signal peptide occupies residues 1 to 21 (MARSLAALLLLLVAAAGDSHA). One can recognise a BURP domain in the interval 65 to 181 (FFLEKDLFPG…RRGRRTGWRP (117 aa)). The disordered stretch occupies residues 112 to 181 (QLSVPAGSPA…RRGRRTGWRP (70 aa)). Positions 128–143 (RPRRSPARRSNARRRS) are enriched in basic residues. The span at 144-157 (SPWWSSPRPASAPA) shows a compositional bias: low complexity. Residues 170–181 (GRRRGRRTGWRP) are compositionally biased toward basic residues.

Expressed in roots, stems, leaves and shoot.

The sequence is that of BURP domain-containing protein 7 (BURP7) from Oryza sativa subsp. japonica (Rice).